Here is a 635-residue protein sequence, read N- to C-terminus: MITITLPDGSRREFEGPVSVMQVAHAIGPGLAKATIAGQIDGGHLVDASDLIEHDAILRIITPEDQEALEIIRHSCAHLVGHAVKQLYPEAKMVIGPVIADGFYYDIYSKRPFTPEDLAAIEQRMVELIAQDYDVVKHITARHDVVRLFKERGEDYKLRLIEDMGPEVTAMGIYHHQEYVDMCRGPHVPNTRFLKAFRLTRISGAYWRGDTKNEQLQRIYGTAWADKKQLEAYMQRLQDAEKRDHRKIGKAQDLFHLQEEGPGLVFWHPKGWVIWQTIENYIRRVYRNSGYGELRCPQILDVSLWQKSGHWDNYKENMFFTDSEKRTYAVKPMNCPGHVQVFNQGLHSYRDLPIRYGEFGACHRNEPSGALHGLLRVRGFTQDDGHIFCTEAQIEAEVTAFHRQALQVYADFGFENIQIKIALRPDKRLGDSLSWDKAEAALRAALSACEVEWQELPGEGAFYGPKIEYHLKDAIGRTWQLGTIQVDFMMPGRLGAEYVDERSQRRHPVMLHRAIVGSMERFIGILIEHYAGIWPTWLAPVQVVIANITDAQYEYAEQVHKALLNQGFRVNIDLRNEKIGYKIREHTLQRVPYLLVVGDREKENGTVAVRTCSREDLGAMSISAFVERLQTEQVV.

In terms of domain architecture, TGS spans 1-62 (MITITLPDGS…EHDAILRIIT (62 aa)). Residues 244–535 (DHRKIGKAQD…LIEHYAGIWP (292 aa)) are catalytic. Zn(2+) contacts are provided by cysteine 335, histidine 386, and histidine 512.

It belongs to the class-II aminoacyl-tRNA synthetase family. In terms of assembly, homodimer. It depends on Zn(2+) as a cofactor.

Its subcellular location is the cytoplasm. It carries out the reaction tRNA(Thr) + L-threonine + ATP = L-threonyl-tRNA(Thr) + AMP + diphosphate + H(+). In terms of biological role, catalyzes the attachment of threonine to tRNA(Thr) in a two-step reaction: L-threonine is first activated by ATP to form Thr-AMP and then transferred to the acceptor end of tRNA(Thr). Also edits incorrectly charged L-seryl-tRNA(Thr). The chain is Threonine--tRNA ligase from Xylella fastidiosa (strain M12).